We begin with the raw amino-acid sequence, 223 residues long: Urease accessory protein UreF (223 aa).

The protein belongs to the UreF family. As to quaternary structure, ureD, UreF and UreG form a complex that acts as a GTP-hydrolysis-dependent molecular chaperone, activating the urease apoprotein by helping to assemble the nickel containing metallocenter of UreC. The UreE protein probably delivers the nickel.

It localises to the cytoplasm. Functionally, required for maturation of urease via the functional incorporation of the urease nickel metallocenter. This is Urease accessory protein UreF from Paenarthrobacter aurescens (strain TC1).